The sequence spans 251 residues: Imidazole glycerol phosphate synthase subunit HisF (251 aa).

Residues D11 and D130 contribute to the active site.

The protein belongs to the HisA/HisF family. As to quaternary structure, heterodimer of HisH and HisF.

It is found in the cytoplasm. The enzyme catalyses 5-[(5-phospho-1-deoxy-D-ribulos-1-ylimino)methylamino]-1-(5-phospho-beta-D-ribosyl)imidazole-4-carboxamide + L-glutamine = D-erythro-1-(imidazol-4-yl)glycerol 3-phosphate + 5-amino-1-(5-phospho-beta-D-ribosyl)imidazole-4-carboxamide + L-glutamate + H(+). Its pathway is amino-acid biosynthesis; L-histidine biosynthesis; L-histidine from 5-phospho-alpha-D-ribose 1-diphosphate: step 5/9. Functionally, IGPS catalyzes the conversion of PRFAR and glutamine to IGP, AICAR and glutamate. The HisF subunit catalyzes the cyclization activity that produces IGP and AICAR from PRFAR using the ammonia provided by the HisH subunit. The polypeptide is Imidazole glycerol phosphate synthase subunit HisF (Chlorobium limicola (strain DSM 245 / NBRC 103803 / 6330)).